The primary structure comprises 58 residues: Preprotein translocase subunit SecG (58 aa).

At 1 to 32 the chain is on the cytoplasmic side; it reads MARKRRKGGEGLVTAIGLVRFYEEVEEKIKVP. A helical membrane pass occupies residues 33–54; that stretch reads PEAVIGAAFALSIMTIALDLLL. Over 55-58 the chain is Extracellular; the sequence is KAAR.

It belongs to the SEC61-beta family. In terms of assembly, component of the protein translocase complex. Heterotrimer consisting of alpha (SecY), beta (SecG) and gamma (SecE) subunits. Can form oligomers of the heterotrimer.

It is found in the cell membrane. Its function is as follows. Involved in protein export. The function of the beta subunit is unknown, but it may be involved in stabilization of the trimeric complex. The protein is Preprotein translocase subunit SecG of Ignicoccus hospitalis (strain KIN4/I / DSM 18386 / JCM 14125).